The primary structure comprises 406 residues: Odorant receptor 10a (406 aa).

Over Met-1–Leu-45 the chain is Cytoplasmic. The chain crosses the membrane as a helical span at residues Ile-46–Leu-66. Over Asp-67 to Ala-74 the chain is Extracellular. Residues Leu-75–Leu-95 form a helical membrane-spanning segment. Residues Arg-96–Ala-143 lie on the Cytoplasmic side of the membrane. Residues Gly-144 to Leu-164 form a helical membrane-spanning segment. The Extracellular segment spans residues Gln-165–Pro-189. N-linked (GlcNAc...) asparagine glycosylation is present at Asn-178. Residues Phe-190–Gly-210 traverse the membrane as a helical segment. The Cytoplasmic portion of the chain corresponds to Gly-211–Thr-281. A helical transmembrane segment spans residues Ile-282–Leu-302. Residues Leu-303–Asn-308 are Extracellular-facing. A helical membrane pass occupies residues Gly-309–Tyr-329. The Cytoplasmic portion of the chain corresponds to Cys-330–Arg-372. The chain crosses the membrane as a helical span at residues Pro-373–Gln-393. The Extracellular segment spans residues Thr-394–Gln-406.

The protein belongs to the insect chemoreceptor superfamily. Heteromeric odorant receptor channel (TC 1.A.69) family. Or1a subfamily. Interacts with Orco. Complexes exist early in the endomembrane system in olfactory sensory neurons (OSNs), coupling these complexes to the conserved ciliary trafficking pathway. As to expression, expressed in olfactory sensory neurons in the antenna.

It is found in the cell membrane. In terms of biological role, odorant receptor which mediates acceptance or avoidance behavior, depending on its substrates. The odorant receptor repertoire encodes a large collection of odor stimuli that vary widely in identity, intensity, and duration. May form a complex with Orco to form odorant-sensing units, providing sensitive and prolonged odorant signaling and calcium permeability. Involved in the behavioral responses to esters, and specifically to ethyl hexanoate, benzaldehyde, and acetophenone. The sequence is that of Odorant receptor 10a (Or10a) from Drosophila melanogaster (Fruit fly).